A 179-amino-acid chain; its full sequence is DELTA-actitoxin-Afr1e (179 aa).

Residues serine 1–valine 29 form an N-terminal alpha-helix that contributes to the pore region. Residues glycine 11 to lysine 30 are N-terminal region. Residue arginine 31 participates in an N-(acyl)-sphingosylphosphocholine binding. Positions 51 and 53 each coordinate N-acetyl-D-glucosamine 6-sulfate. An N-(acyl)-sphingosylphosphocholine is bound by residues arginine 53, serine 54, arginine 79, glycine 85, tyrosine 108, tyrosine 113, serine 114, tryptophan 116, tyrosine 133, tyrosine 137, tyrosine 138, arginine 144, and glycine 168. The trp-rich region, which is important for the binding to lipid membrane stretch occupies residues serine 105 to arginine 120. Residue tyrosine 138 coordinates N-acetyl-D-glucosamine 6-sulfate. A Cell attachment site, crucial for protein stability motif is present at residues arginine 144–aspartate 146.

Belongs to the actinoporin family. Sea anemone subfamily. Octamer or nonamer in membranes. Monomer in the soluble state.

The protein resides in the secreted. It localises to the nematocyst. It is found in the target cell membrane. Pore-forming toxin (PFT) that consists of a crown-shaped octamer or nonamer that forms cation-selective hydrophilic pores of about 1.5 nm (inside) and 13 nm (outside) and causes cytolysis. It causes cardiac stimulation. Also causes hemolysis (HC(50)=1.6 nM). Interestingly, the Phe-16 is crucial for hemolysis. Pore formation is a multi-step process that involves specific recognition of membrane sphingomyelin (but neither cholesterol nor phosphatidylcholine) using aromatic rich region and adjacent phosphocholine (POC) binding site, firm binding to the membrane (mainly driven by hydrophobic interactions) accompanied by the transfer of the N-terminal region to the lipid-water interface and finally pore formation after oligomerization of monomers. It is probable that a dimeric form is an assembly intermediate before the complete oligomerization. The formation of stable pores occurs only in vesicles composed of DOPC/SM (there is no oligomerization when the PFT is treated with vesicles of DOPC or SM alone). The transmembrane pore displays 8 lateral perforations, one at each subunit-subunit interface, partially occupied by the acyl-chain region of a bridging lipid. Each pore contains 24 lipid molecules, firmly bound to each subunit, that is, 3 lipids (L1, L2, L3, L4 and/or L5) are associated to each subunit. Lipid L1 bridges 2 subunits, whereas lipids L2 and L3 bind to sites at single subunit. The sequence is that of DELTA-actitoxin-Afr1e from Actinia fragacea (Strawberry anemone).